A 396-amino-acid chain; its full sequence is Elongation factor Tu (396 aa).

A tr-type G domain is found at 10 to 206; that stretch reads KPHVNVGTIG…ALDTYIPTPE (197 aa). Residues 19-26 form a G1 region; sequence GHVDHGKT. Residue 19-26 coordinates GTP; that stretch reads GHVDHGKT. Threonine 26 contributes to the Mg(2+) binding site. Positions 60–64 are G2; that stretch reads GITIN. The tract at residues 81 to 84 is G3; it reads DCPG. GTP is bound by residues 81 to 85 and 136 to 139; these read DCPGH and NKCD. A G4 region spans residues 136-139; the sequence is NKCD. A G5 region spans residues 174-176; that stretch reads SAK.

The protein belongs to the TRAFAC class translation factor GTPase superfamily. Classic translation factor GTPase family. EF-Tu/EF-1A subfamily. As to quaternary structure, monomer.

The protein resides in the cytoplasm. The enzyme catalyses GTP + H2O = GDP + phosphate + H(+). Functionally, GTP hydrolase that promotes the GTP-dependent binding of aminoacyl-tRNA to the A-site of ribosomes during protein biosynthesis. The sequence is that of Elongation factor Tu from Burkholderia mallei (strain NCTC 10247).